A 367-amino-acid polypeptide reads, in one-letter code: Anhydro-N-acetylmuramic acid kinase (367 aa).

11–18 (GTSLDGVD) is a binding site for ATP.

It belongs to the anhydro-N-acetylmuramic acid kinase family.

It carries out the reaction 1,6-anhydro-N-acetyl-beta-muramate + ATP + H2O = N-acetyl-D-muramate 6-phosphate + ADP + H(+). The protein operates within amino-sugar metabolism; 1,6-anhydro-N-acetylmuramate degradation. Its pathway is cell wall biogenesis; peptidoglycan recycling. Its function is as follows. Catalyzes the specific phosphorylation of 1,6-anhydro-N-acetylmuramic acid (anhMurNAc) with the simultaneous cleavage of the 1,6-anhydro ring, generating MurNAc-6-P. Is required for the utilization of anhMurNAc either imported from the medium or derived from its own cell wall murein, and thus plays a role in cell wall recycling. The polypeptide is Anhydro-N-acetylmuramic acid kinase (Bradyrhizobium diazoefficiens (strain JCM 10833 / BCRC 13528 / IAM 13628 / NBRC 14792 / USDA 110)).